The primary structure comprises 468 residues: Ribulose bisphosphate carboxylase large chain (468 aa).

Residue Lys5 is modified to N6,N6,N6-trimethyllysine. The substrate site is built by Asn114 and Thr164. Lys166 (proton acceptor) is an active-site residue. Lys168 provides a ligand contact to substrate. Lys192, Asp194, and Glu195 together coordinate Mg(2+). N6-carboxylysine is present on Lys192. His285 (proton acceptor) is an active-site residue. Residues Arg286, His318, and Ser370 each coordinate substrate.

It belongs to the RuBisCO large chain family. Type I subfamily. In terms of assembly, heterohexadecamer of 8 large chains and 8 small chains; disulfide-linked. The disulfide link is formed within the large subunit homodimers. The cofactor is Mg(2+). Post-translationally, the disulfide bond which can form in the large chain dimeric partners within the hexadecamer appears to be associated with oxidative stress and protein turnover.

It is found in the plastid. The protein resides in the chloroplast. The enzyme catalyses 2 (2R)-3-phosphoglycerate + 2 H(+) = D-ribulose 1,5-bisphosphate + CO2 + H2O. The catalysed reaction is D-ribulose 1,5-bisphosphate + O2 = 2-phosphoglycolate + (2R)-3-phosphoglycerate + 2 H(+). Its function is as follows. RuBisCO catalyzes two reactions: the carboxylation of D-ribulose 1,5-bisphosphate, the primary event in carbon dioxide fixation, as well as the oxidative fragmentation of the pentose substrate in the photorespiration process. Both reactions occur simultaneously and in competition at the same active site. This Salvia divinorum (Maria pastora) protein is Ribulose bisphosphate carboxylase large chain.